Consider the following 201-residue polypeptide: Lymphotoxin-alpha (201 aa).

An N-terminal signal peptide occupies residues 1 to 27 (MTSSGVLCLLGALSLQVLLLQPPGAQG). Residues 23 to 52 (PGAQGAPNPDNSHSSSPAPPQTAQHLSQKS) form a disordered region. Over residues 31–51 (PDNSHSSSPAPPQTAQHLSQK) the composition is skewed to polar residues. In terms of domain architecture, THD spans 60 to 201 (PAAHLVGDPS…SSVFFGAFAL (142 aa)). Residue asparagine 93 is glycosylated (N-linked (GlcNAc...) asparagine). A disulfide bridge links cysteine 117 with cysteine 152.

This sequence belongs to the tumor necrosis factor family. Homotrimer, and heterotrimer of either two LTB and one LTA subunits or (less prevalent) two LTA and one LTB subunits. Interacts with TNFRSF14.

It localises to the secreted. The protein localises to the membrane. Its function is as follows. Cytokine that in its homotrimeric form binds to TNFRSF1A/TNFR1, TNFRSF1B/TNFBR and TNFRSF14/HVEM. In its heterotrimeric form with LTB binds to TNFRSF3/LTBR. Lymphotoxin is produced by lymphocytes and is cytotoxic for a wide range of tumor cells in vitro and in vivo. This chain is Lymphotoxin-alpha (LTA), found in Notamacropus eugenii (Tammar wallaby).